A 212-amino-acid polypeptide reads, in one-letter code: Ribosomal RNA small subunit methyltransferase G (212 aa).

S-adenosyl-L-methionine-binding positions include Gly-80, Leu-85, 131–132 (AE), and Arg-146.

Belongs to the methyltransferase superfamily. RNA methyltransferase RsmG family.

The protein resides in the cytoplasm. It carries out the reaction guanosine(527) in 16S rRNA + S-adenosyl-L-methionine = N(7)-methylguanosine(527) in 16S rRNA + S-adenosyl-L-homocysteine. In terms of biological role, specifically methylates the N7 position of guanine in position 527 of 16S rRNA. This chain is Ribosomal RNA small subunit methyltransferase G, found in Xanthomonas euvesicatoria pv. vesicatoria (strain 85-10) (Xanthomonas campestris pv. vesicatoria).